A 157-amino-acid chain; its full sequence is Ribonuclease H (157 aa).

Residues 3–144 (ELKQLYIFTD…CDVLARKAAE (142 aa)) enclose the RNase H type-1 domain. The Mg(2+) site is built by aspartate 12, glutamate 50, aspartate 72, and aspartate 136.

The protein belongs to the RNase H family. In terms of assembly, monomer. Requires Mg(2+) as cofactor.

It localises to the cytoplasm. It carries out the reaction Endonucleolytic cleavage to 5'-phosphomonoester.. Functionally, endonuclease that specifically degrades the RNA of RNA-DNA hybrids. This is Ribonuclease H from Shewanella frigidimarina (strain NCIMB 400).